The following is a 337-amino-acid chain: tRNA N6-adenosine threonylcarbamoyltransferase (337 aa).

Residues H111 and H115 each contribute to the Fe cation site. Substrate contacts are provided by residues 134-138 (LVSGG), D167, G180, and N272. D300 lines the Fe cation pocket.

This sequence belongs to the KAE1 / TsaD family. It depends on Fe(2+) as a cofactor.

It is found in the cytoplasm. The catalysed reaction is L-threonylcarbamoyladenylate + adenosine(37) in tRNA = N(6)-L-threonylcarbamoyladenosine(37) in tRNA + AMP + H(+). Required for the formation of a threonylcarbamoyl group on adenosine at position 37 (t(6)A37) in tRNAs that read codons beginning with adenine. Is involved in the transfer of the threonylcarbamoyl moiety of threonylcarbamoyl-AMP (TC-AMP) to the N6 group of A37, together with TsaE and TsaB. TsaD likely plays a direct catalytic role in this reaction. The chain is tRNA N6-adenosine threonylcarbamoyltransferase from Salmonella schwarzengrund (strain CVM19633).